A 451-amino-acid chain; its full sequence is MGKYFGTDGVRGEANVELTPELAFKLGRFGGYVLSQHETERPKVFVARDTRISGEMLESALIAGLLSVGIEVYKLGVLATPGVSYLVRTEKASAGVMISASHNPALDNGIKFFGNDGFKLADDQELEIEALLDAPEDTLPRPSAEGLGTLVDYPEGLRKYEKFLVTTGTDLSGMTVALDTANGAASVSARDVFLDLNAEIAVIGEKPNGLNINDGVGSTHPEQLQELVKETGADLGLAFDGDSDRLIAVDETGEIVDGDRIIFIIGKYLSEKGLLAHNTIVTTVMSNLGFHKALDKQGINKAITAVGDRYVVEEMRSSGYNLGGEQSGHVIIMDYNTTGDGQLTAIQLAKVMKETGKSLSELAAEVTIYPQKLVNIRVENSMKDRAMEVPAIANIIAKMEDEMAGNGRILVRPSGTEPLLRVMAEAPTDAEVDYYVDTIADVVRTEIGCDN.

Residue Ser101 is the Phosphoserine intermediate of the active site. The Mg(2+) site is built by Ser101, Asp240, Asp242, and Asp244. Residue Ser101 is modified to Phosphoserine.

This sequence belongs to the phosphohexose mutase family. Mg(2+) is required as a cofactor. Post-translationally, activated by phosphorylation.

The enzyme catalyses alpha-D-glucosamine 1-phosphate = D-glucosamine 6-phosphate. Functionally, catalyzes the conversion of glucosamine-6-phosphate to glucosamine-1-phosphate. This Streptococcus pyogenes serotype M12 (strain MGAS2096) protein is Phosphoglucosamine mutase.